The chain runs to 62 residues: Large ribosomal subunit protein bL32 (62 aa).

A compositionally biased stretch (basic residues) spans 1–18 (MGVPKKRTSKMRRDRRRA). Residues 1 to 22 (MGVPKKRTSKMRRDRRRAANNN) form a disordered region.

The protein belongs to the bacterial ribosomal protein bL32 family.

The sequence is that of Large ribosomal subunit protein bL32 from Myxococcus xanthus (strain DK1622).